We begin with the raw amino-acid sequence, 455 residues long: GTPase Der (455 aa).

EngA-type G domains follow at residues 4 to 174 (PIVA…PAGQ) and 183 to 358 (LKIA…SERN). Residues 10–17 (GRPNVGKS), 57–61 (DTAGL), 126–129 (NKAD), 189–196 (GRPNVGKS), 236–240 (DTAGI), and 301–304 (NKWD) each bind GTP. Residues 359-444 (KRVSTSDINN…PIILVFKGRE (86 aa)) enclose the KH-like domain.

The protein belongs to the TRAFAC class TrmE-Era-EngA-EngB-Septin-like GTPase superfamily. EngA (Der) GTPase family. As to quaternary structure, associates with the 50S ribosomal subunit.

Functionally, GTPase that plays an essential role in the late steps of ribosome biogenesis. This Herpetosiphon aurantiacus (strain ATCC 23779 / DSM 785 / 114-95) protein is GTPase Der.